A 254-amino-acid chain; its full sequence is tRNA uridine(34) hydroxylase (254 aa).

The Rhodanese domain occupies 123–217; sequence QDPNVILLDT…YLESIPEGES (95 aa). The active-site Cysteine persulfide intermediate is cysteine 177.

The protein belongs to the TrhO family.

The enzyme catalyses uridine(34) in tRNA + AH2 + O2 = 5-hydroxyuridine(34) in tRNA + A + H2O. Catalyzes oxygen-dependent 5-hydroxyuridine (ho5U) modification at position 34 in tRNAs. The polypeptide is tRNA uridine(34) hydroxylase (Legionella pneumophila (strain Lens)).